Reading from the N-terminus, the 784-residue chain is MNAESRIHALRAELDQHNYRYYVLDEPSVPDAEYDRLFNELKALEAEHPQLVTADSPTQRVGGAALAAFSQVRHEVPMLSLGNAFEEDDLRDFDRRVVEGLDLPGGDLFAAQAAVDYSCEPKLDGLAVSLLYRDGQLVQGATRGDGTTGEDISTNVRTVRNIPLKLQGEGWPAVLEVRGEVYMSKAGFDRLNAAQAEAGGKTFANPRNAAAGSLRQLDSKITASRPLEFCCYGVGQVSEPFGDSHIGILEKLKTWGLPISRELRHAAGIEECLAYYRDIGARRNDLPYEIDGVVFKVNSLASQRELGFRAREPRWAIAHKFPAMEELTEVLDVEFQVGRTGAVTPVARLKPVKVAGVMVSNATLHNMDEIARLGLRIGDTVIIRRAGDVIPQVMQVVLDRRPENARPVEVPTECPVCGSQVERTQLVKRSKGKETISEGAVYRCVGRLSCAAQLKQAIIHYVSRRAMDIDGLGEKSVEQLVDEGLIRSPADLYKLEFEQVVVLEGFAEVSSRKLLEAIEASKRPSLARFIYALGIPDVGEETAKVLARSLGSLARVQVALPQVLTYLPDIGLEVAHEIHNFFEDTHNREVIAQLLASGMQLQEEGELGAEFAASTTLAGMLAKLDIPSVGPTGAEKLVDKLGTLDKIIAADGIDLRQALNTKQAEGVREFFRDEANQLLARAIEAQLLDFGMHWSCEKRSAEGLPLAGQTWVLTGTLERMSRDVAKEQLERLGAKVAGSVSGKTHCVVAGPGAGSKLAKANELGVKVLDEEQFVAFMAEQGITL.

NAD(+)-binding positions include 31–35, 80–81, and E120; these read DAEYD and SL. K122 acts as the N6-AMP-lysine intermediate in catalysis. R143, E180, K296, and K320 together coordinate NAD(+). Positions 414, 417, 444, and 450 each coordinate Zn(2+). Residues 701–784 form the BRCT domain; it reads AEGLPLAGQT…AFMAEQGITL (84 aa).

It belongs to the NAD-dependent DNA ligase family. LigA subfamily. Mg(2+) serves as cofactor. The cofactor is Mn(2+).

The enzyme catalyses NAD(+) + (deoxyribonucleotide)n-3'-hydroxyl + 5'-phospho-(deoxyribonucleotide)m = (deoxyribonucleotide)n+m + AMP + beta-nicotinamide D-nucleotide.. Its function is as follows. DNA ligase that catalyzes the formation of phosphodiester linkages between 5'-phosphoryl and 3'-hydroxyl groups in double-stranded DNA using NAD as a coenzyme and as the energy source for the reaction. It is essential for DNA replication and repair of damaged DNA. This chain is DNA ligase, found in Pseudomonas entomophila (strain L48).